The chain runs to 382 residues: Dihydroflavonol 4-reductase (382 aa).

NADP(+) is bound by residues lysine 44 and tyrosine 163.

This sequence belongs to the NAD(P)-dependent epimerase/dehydratase family. Dihydroflavonol-4-reductase subfamily.

The catalysed reaction is a (2R,3S,4S)-leucoanthocyanidin + NADP(+) = a (2R,3R)-dihydroflavonol + NADPH + H(+). It catalyses the reaction (2S)-flavan-4-ol + NADP(+) = (2S)-flavanone + NADPH + H(+). Its pathway is pigment biosynthesis; anthocyanin biosynthesis. Its function is as follows. Bifunctional enzyme involved in flavonoid metabolism. This Arabidopsis thaliana (Mouse-ear cress) protein is Dihydroflavonol 4-reductase (DFRA).